A 386-amino-acid polypeptide reads, in one-letter code: Paralemmin-1 (386 aa).

Residues 4-115 (VEANTLQQER…TKENLAEAAA (112 aa)) adopt a coiled-coil conformation. Disordered stretches follow at residues 21-40 (RKRQ…DRRQ), 51-149 (ERWL…PMKA), 240-290 (EATA…TMIF), and 321-378 (DAES…AKKQ). Basic and acidic residues-rich tracts occupy residues 24–40 (QTEI…DRRQ) and 68–95 (AMKK…RELE). Low complexity predominate over residues 97–116 (LENSSSVTSTKENLAEAAAP). 3 stretches are compositionally biased toward basic and acidic residues: residues 259–282 (PRRE…EPSR), 322–334 (AESK…KDHA), and 365–377 (EAKE…DAKK). 2 S-palmitoyl cysteine lipidation sites follow: C380 and C382. C383 bears the Cysteine methyl ester mark. C383 carries S-farnesyl cysteine lipidation. Residues 384-386 (TVM) constitute a propeptide, removed in mature form.

This sequence belongs to the paralemmin family. As to quaternary structure, interacts with dopamine receptor DRD3. Phosphorylated. As to expression, expressed in the lens (at protein level). Highly expressed in forebrain and cerebellum with lower expression in adrenal gland and heart. Expression weak or undetectable in other tissues.

It localises to the cell membrane. Its subcellular location is the cell projection. The protein resides in the filopodium membrane. It is found in the axon. The protein localises to the dendrite. It localises to the dendritic spine. Its subcellular location is the basolateral cell membrane. The protein resides in the apicolateral cell membrane. In terms of biological role, involved in plasma membrane dynamics and cell process formation. Isoform 1 and isoform 2 are necessary for axonal and dendritic filopodia induction, for dendritic spine maturation and synapse formation in a palmitoylation-dependent manner. This chain is Paralemmin-1 (PALM), found in Gallus gallus (Chicken).